Reading from the N-terminus, the 303-residue chain is Fe-S cluster assembly protein DRE2 (303 aa).

The N-terminal SAM-like domain stretch occupies residues 1–125; the sequence is MTHSRTALVL…WQKRAVTASA (125 aa). The segment at 126 to 188 is linker; that stretch reads PVKLAPRQPV…GDAPIAENDL (63 aa). [2Fe-2S] cluster-binding residues include Cys-202, Cys-213, Cys-216, and Cys-218. The tract at residues 202-218 is fe-S binding site A; the sequence is CGRTQTRRRKACKDCTC. [4Fe-4S] cluster is bound by residues Cys-266, Cys-269, Cys-277, and Cys-280. Short sequence motifs (cx2C motif) lie at residues 266–269 and 277–280; these read CGSC and CSGC. The interval 266-280 is fe-S binding site B; sequence CGSCSLGDAFRCSGC.

Belongs to the anamorsin family. Monomer. Interacts with TAH18. Interacts with MIA40. It depends on [2Fe-2S] cluster as a cofactor. Requires [4Fe-4S] cluster as cofactor.

It localises to the cytoplasm. The protein localises to the mitochondrion intermembrane space. In terms of biological role, component of the cytosolic iron-sulfur (Fe-S) protein assembly (CIA) machinery required for the maturation of extramitochondrial Fe-S proteins. Part of an electron transfer chain functioning in an early step of cytosolic Fe-S biogenesis, facilitating the de novo assembly of a [4Fe-4S] cluster on the scaffold complex CFD1-NBP35. Electrons are transferred to DRE2 from NADPH via the FAD- and FMN-containing protein TAH18. TAH18-DRE2 are also required for the assembly of the diferric tyrosyl radical cofactor of ribonucleotide reductase (RNR), probably by providing electrons for reduction during radical cofactor maturation in the catalytic small subunit RNR2. This chain is Fe-S cluster assembly protein DRE2, found in Eremothecium gossypii (strain ATCC 10895 / CBS 109.51 / FGSC 9923 / NRRL Y-1056) (Yeast).